The following is a 427-amino-acid chain: Glutamate-1-semialdehyde 2,1-aminomutase (427 aa).

N6-(pyridoxal phosphate)lysine is present on lysine 265.

This sequence belongs to the class-III pyridoxal-phosphate-dependent aminotransferase family. HemL subfamily. As to quaternary structure, homodimer. Pyridoxal 5'-phosphate serves as cofactor.

Its subcellular location is the cytoplasm. The catalysed reaction is (S)-4-amino-5-oxopentanoate = 5-aminolevulinate. Its pathway is porphyrin-containing compound metabolism; protoporphyrin-IX biosynthesis; 5-aminolevulinate from L-glutamyl-tRNA(Glu): step 2/2. In Pseudomonas paraeruginosa (strain DSM 24068 / PA7) (Pseudomonas aeruginosa (strain PA7)), this protein is Glutamate-1-semialdehyde 2,1-aminomutase.